The sequence spans 125 residues: uncharacterized protein (125 aa).

This is an uncharacterized protein from Bacillus subtilis (strain 168).